We begin with the raw amino-acid sequence, 2381 residues long: Protein Ycf2 (2381 aa).

1655 to 1662 lines the ATP pocket; that stretch reads GPMETGRS.

Belongs to the Ycf2 family.

It is found in the plastid. It localises to the chloroplast stroma. Probable ATPase of unknown function. Its presence in a non-photosynthetic plant (Epifagus virginiana) and experiments in tobacco indicate that it has an essential function which is probably not related to photosynthesis. The polypeptide is Protein Ycf2 (Angiopteris evecta (Mule's foot fern)).